A 1001-amino-acid polypeptide reads, in one-letter code: MPKTDACERMLQSIRSHKNSKLENQRLPAILLHSIDNYIDSKSLQRTASVYFSALLALIKQSNGFDYSSIYILSIVMPATPSDEKLLHIDLLYTQIVPYLQKNNDDAPTIRCALNCTQEFLLSFSNESKELYLKAVDVVMPLLVKFSVDLRPKVRKISIQVLQTLKQKYDGLLPHLYPAIFDELQRSLSEVSNMDNPSFSKGLHTLHLLECLVDINQASGSDLGIICNALSRILTSNIPTSEPIFEMSIKLILKVLSERIDALSDAVIYELCDSLIPYWYRALSVTLLLYDNFVNRNPSRGIKGIQTLLEKILDFCISPLQSSESDVEYDGATSSDILNSLKFLRNKFTMKFVNKKNWATVLSNGIKKVIKTITASSRHANYAKALPRCSVYLQLLLGAIPEDQISELLPAFSVVARAIIKNKLVETPECLDLFKIFIQKLASPTFLECLGFADNFCNIQKSHWLPEVFRDNITGETPETFFDCFLPTIEAGNSQWWELLPLYTKAGCITNNLNENTLKKLASAIYNDRSCHSHVAQAFVDLTKIENVRQLISSNSSNLIGVLGNTLATMKNDDSNAEDLVMAATSIFSVAGDQQLQIITNLCESAPLSEPSLGSTGVIKLFPALLSISPADTWKPFLPHLVKLFDIAIPSNLSQSLSVLNFGPGLAYRLLQATLSNERMISAIVPVISRLYDSMNSVGDGSQALPKYVALERLKTWKLLFKLLPNDEFHLLPSAIAEVVLFSKHHDDDLRAMAFELLVEVGNRMKNGGKINMSLIDGEEPNKTVVEANINEYISMISANLMNDSLNLKVSTIFALTRIFYEFSDYIDDDYVNAVLEEVQSSLQSNNQEIARAAVGFIKMYITSFTKSKVLFHLDTLLPLILRWIKEHNAYVKLKAKQLLDRMLRVFSLKELEAFAENETDKEWLQRIWRVRRSRGDKKVVDNKRDASDSEDLAIKNPMNKKAKVGKVDFRKHEKKLNKASMHRDKFSTGMHTSKRVQKKN.

The segment covering 939-948 (KVVDNKRDAS) has biased composition (basic and acidic residues). A disordered region spans residues 939–1001 (KVVDNKRDAS…HTSKRVQKKN (63 aa)). Phosphoserine is present on residues Ser-948 and Ser-950.

This is an uncharacterized protein from Schizosaccharomyces pombe (strain 972 / ATCC 24843) (Fission yeast).